The sequence spans 504 residues: MFS antiporter QDR2 (504 aa).

Positions Met1–Val14 are enriched in polar residues. Positions Met1–Glu23 are disordered. Residues Met1–Leu41 lie on the Cytoplasmic side of the membrane. A helical transmembrane segment spans residues Val42–Phe62. Topologically, residues Pro63–Ser75 are extracellular. Residues Ser76–Ile96 form a helical membrane-spanning segment. Over Ser97 to Arg106 the chain is Cytoplasmic. The chain crosses the membrane as a helical span at residues Arg107–Val129. Residues Tyr130–Leu132 lie on the Extracellular side of the membrane. The helical transmembrane segment at Leu133–Ala155 threads the bilayer. Residues Gly156–Gly169 lie on the Cytoplasmic side of the membrane. A helical transmembrane segment spans residues Ala170–Ile190. Topologically, residues Ser191 to Ser198 are extracellular. Residues Ile199–Pro219 traverse the membrane as a helical segment. Over Glu220–Asn278 the chain is Cytoplasmic. Residues Val279–Ser299 form a helical membrane-spanning segment. The Extracellular portion of the chain corresponds to Leu300–Ser311. Residues Val312–Val332 traverse the membrane as a helical segment. Over Val333–Leu370 the chain is Cytoplasmic. The chain crosses the membrane as a helical span at residues Thr371–Ile391. The Extracellular segment spans residues Gln392 to His396. The chain crosses the membrane as a helical span at residues Ile397–Ile417. Over Cys418 to Asn438 the chain is Cytoplasmic. A helical membrane pass occupies residues Leu439 to Ile456. Over Asn457–Asn460 the chain is Extracellular. Residues Val461–Leu483 traverse the membrane as a helical segment. Residues His484–Gln504 are Cytoplasmic-facing.

It belongs to the major facilitator superfamily. CAR1 family.

The protein resides in the cell membrane. MFS antiporter that does not display functional linkage as drug transporter and performs functions that significantly affect biofilm development and virulence. No substrate for transport has been identified yet, but plays an important role in the growth in the host. The polypeptide is MFS antiporter QDR2 (QDR2) (Candida albicans (strain SC5314 / ATCC MYA-2876) (Yeast)).